The following is a 157-amino-acid chain: SsrA-binding protein (157 aa).

The tract at residues 130–157 (HDKRQDMAKKDSQRRIQKELGQRQKGME) is disordered. Basic and acidic residues predominate over residues 132 to 157 (KRQDMAKKDSQRRIQKELGQRQKGME).

This sequence belongs to the SmpB family.

The protein localises to the cytoplasm. In terms of biological role, required for rescue of stalled ribosomes mediated by trans-translation. Binds to transfer-messenger RNA (tmRNA), required for stable association of tmRNA with ribosomes. tmRNA and SmpB together mimic tRNA shape, replacing the anticodon stem-loop with SmpB. tmRNA is encoded by the ssrA gene; the 2 termini fold to resemble tRNA(Ala) and it encodes a 'tag peptide', a short internal open reading frame. During trans-translation Ala-aminoacylated tmRNA acts like a tRNA, entering the A-site of stalled ribosomes, displacing the stalled mRNA. The ribosome then switches to translate the ORF on the tmRNA; the nascent peptide is terminated with the 'tag peptide' encoded by the tmRNA and targeted for degradation. The ribosome is freed to recommence translation, which seems to be the essential function of trans-translation. The polypeptide is SsrA-binding protein (Alkaliphilus metalliredigens (strain QYMF)).